The sequence spans 20 residues: Outer membrane protein 40Va (20 aa).

The protein belongs to the Gram-negative porin family. As to quaternary structure, homotrimer.

It is found in the cell outer membrane. In terms of biological role, forms pores that allow passive diffusion of small molecules across the outer membrane. The polypeptide is Outer membrane protein 40Va (Vibrio alginolyticus).